Consider the following 1222-residue polypeptide: Protein SCP160 (1222 aa).

Positions 1–12 (MSEEQTAIDSPP) are enriched in polar residues. The tract at residues 1 to 59 (MSEEQTAIDSPPSTVEGSVETVTTIDSPSTTASTIAATAEEHPQLEKKPTPLPSLKDLP) is disordered. The span at 13–38 (STVEGSVETVTTIDSPSTTASTIAAT) shows a compositional bias: low complexity. Residues 39 to 49 (AEEHPQLEKKP) are compositionally biased toward basic and acidic residues. Position 50 is a phosphothreonine (Thr50). Ser54, Ser63, Ser85, Ser87, and Ser89 each carry phosphoserine. Residues 79–98 (KPAVSNSPSPSPSAPSLTTG) are disordered. In terms of domain architecture, KH 1 spans 177–249 (PINAVIEVPS…ESVNLAKAKI (73 aa)). The residue at position 630 (Ser630) is a Phosphoserine. KH domains are found at residues 634-702 (KSKM…KKYL), 712-771 (IITK…HEEL), 782-851 (GHKM…AKRV), 861-929 (FVTE…VEEI), and 939-1001 (SVTK…EKKI). Ser1112 bears the Phosphoserine mark. One can recognise a KH 7 domain in the interval 1153–1216 (YAGYVWGADT…AGVEKAGEMV (64 aa)).

The protein resides in the endoplasmic reticulum membrane. It localises to the nucleus membrane. Functionally, involved in the control of mitotic chromosome transmission. Required during cell division for faithful partitioning of the ER-nuclear envelope membranes which, in S.cerevisiae, enclose the duplicated chromosomes. In Saccharomyces cerevisiae (strain ATCC 204508 / S288c) (Baker's yeast), this protein is Protein SCP160 (SCP160).